Here is a 313-residue protein sequence, read N- to C-terminus: Putative S-adenosyl-L-methionine-dependent methyltransferase MAV_4573 (313 aa).

S-adenosyl-L-methionine contacts are provided by residues aspartate 129 and 158–159; that span reads DL.

It belongs to the UPF0677 family.

Functionally, exhibits S-adenosyl-L-methionine-dependent methyltransferase activity. In Mycobacterium avium (strain 104), this protein is Putative S-adenosyl-L-methionine-dependent methyltransferase MAV_4573.